Here is a 72-residue protein sequence, read N- to C-terminus: Translation initiation factor IF-1 (72 aa).

An S1-like domain is found at 1–72 (MAKEDVIEIE…TRGRITYRFK (72 aa)).

This sequence belongs to the IF-1 family. Component of the 30S ribosomal translation pre-initiation complex which assembles on the 30S ribosome in the order IF-2 and IF-3, IF-1 and N-formylmethionyl-tRNA(fMet); mRNA recruitment can occur at any time during PIC assembly.

It is found in the cytoplasm. One of the essential components for the initiation of protein synthesis. Stabilizes the binding of IF-2 and IF-3 on the 30S subunit to which N-formylmethionyl-tRNA(fMet) subsequently binds. Helps modulate mRNA selection, yielding the 30S pre-initiation complex (PIC). Upon addition of the 50S ribosomal subunit IF-1, IF-2 and IF-3 are released leaving the mature 70S translation initiation complex. The sequence is that of Translation initiation factor IF-1 from Streptococcus agalactiae serotype Ia (strain ATCC 27591 / A909 / CDC SS700).